A 431-amino-acid chain; its full sequence is Islet cell autoantigen 1-like protein (431 aa).

The 204-residue stretch at A44–E247 folds into the AH domain. Disordered regions lie at residues E295 to S316 and C351 to S372. Over residues R301–S316 the composition is skewed to basic and acidic residues. Positions T356 to S372 are enriched in polar residues.

This Mus musculus (Mouse) protein is Islet cell autoantigen 1-like protein (Ica1l).